A 380-amino-acid polypeptide reads, in one-letter code: MKATILLFLVLAVVQLSTAAEQLKFVFVTVRGADYEVCDIPGGPKITNKDGKDSKLTEEGKNTVYQLGVKVSELYKSKLGVSKWDSSKNYWPIATNSRRSQISTLITGAGLEGDQSKRDKSWTDEELKKTSFPAMLQFWKFIDPAKCPKFFKEVSQQPEIATTLQDCASQMQEVKKHYDTVDPTKPQHVWLTYETLKKMKKQQPSKVEWASDDMMKKLRECSAKLNWLATTKTDTLRKLSGGLILSDILNDMKEITQGKAQPHATGGTSNKLSLFTTPQGLLIAKLAVFMPPGATLDGKVPTSSEVYPESGATMNTEMYEDNGTWKVKLIYYEGKDYPGKTIKLPGCEEKCPFQQFQQILTKYAVNEQEHETLCKSAQWP.

A signal peptide spans 1-19 (MKATILLFLVLAVVQLSTA). 3 cysteine pairs are disulfide-bonded: C147-C374, C167-C221, and C347-C351.

This sequence belongs to the histidine acid phosphatase family.

Its subcellular location is the secreted. Functionally, probably modulates blood feeding of fleas on vertebrate species by binding and sequestering different mediators involved in the host response. Binds histamine. Binds leukotriene C4. Does not bind serotonin, adrenaline, noradrenaline, leukotriene B4, leukotriene D4, leukotriene E4, ADP, and stable analogs of thromboxane A2: U-46619 and cTXA2. This Xenopsylla cheopis (Oriental rat flea) protein is Acid phosphatase-like protein XcAP-3.